Here is a 76-residue protein sequence, read N- to C-terminus: MDIITLAEVAGNLSVIGYGIGTLGPGIGLGILFGKAMESTARQPEMSGKIQTIMFIGLALVEVLALIGFVAALIIR.

The next 2 helical transmembrane spans lie at 13 to 33 and 55 to 75; these read LSVIGYGIGTLGPGIGLGILF and FIGLALVEVLALIGFVAALII.

Belongs to the ATPase C chain family. In terms of assembly, F-type ATPases have 2 components, F(1) - the catalytic core - and F(0) - the membrane proton channel. F(1) has five subunits: alpha(3), beta(3), gamma(1), delta(1), epsilon(1). F(0) has three main subunits: a(1), b(2) and c(10-14). The alpha and beta chains form an alternating ring which encloses part of the gamma chain. F(1) is attached to F(0) by a central stalk formed by the gamma and epsilon chains, while a peripheral stalk is formed by the delta and b chains.

It localises to the cell membrane. In terms of biological role, f(1)F(0) ATP synthase produces ATP from ADP in the presence of a proton or sodium gradient. F-type ATPases consist of two structural domains, F(1) containing the extramembraneous catalytic core and F(0) containing the membrane proton channel, linked together by a central stalk and a peripheral stalk. During catalysis, ATP synthesis in the catalytic domain of F(1) is coupled via a rotary mechanism of the central stalk subunits to proton translocation. Functionally, key component of the F(0) channel; it plays a direct role in translocation across the membrane. A homomeric c-ring of between 10-14 subunits forms the central stalk rotor element with the F(1) delta and epsilon subunits. The sequence is that of ATP synthase subunit c from Bifidobacterium longum subsp. infantis (strain ATCC 15697 / DSM 20088 / JCM 1222 / NCTC 11817 / S12).